The following is a 161-amino-acid chain: Ubiquitin-conjugating enzyme E2Q-like protein 1 (161 aa).

Residues 1–154 (MKELQDIARL…VKTHEKYGWV (154 aa)) enclose the UBC core domain. The active-site Glycyl thioester intermediate is the cysteine 88.

The protein belongs to the ubiquitin-conjugating enzyme family. As to quaternary structure, interacts with FBXW7.

The protein localises to the nucleus. The catalysed reaction is S-ubiquitinyl-[E1 ubiquitin-activating enzyme]-L-cysteine + [E2 ubiquitin-conjugating enzyme]-L-cysteine = [E1 ubiquitin-activating enzyme]-L-cysteine + S-ubiquitinyl-[E2 ubiquitin-conjugating enzyme]-L-cysteine.. Its pathway is protein modification; protein ubiquitination. In terms of biological role, probable E2 ubiquitin-protein ligase that catalyzes the covalent attachment of ubiquitin to target proteins. May facilitate the monoubiquitination and degradation of MTOR and CCNE1 through interaction with FBXW7. This Mus musculus (Mouse) protein is Ubiquitin-conjugating enzyme E2Q-like protein 1 (Ube2ql1).